The sequence spans 55 residues: ATP synthase F(0) complex subunit 8 (55 aa).

The helical transmembrane segment at 8 to 24 (PWFSIMVMTWLTLALLI) threads the bilayer. The segment at 35 to 55 (NPPSKKPSLITKPTPWAWPWT) is disordered.

It belongs to the ATPase protein 8 family. In terms of assembly, component of the ATP synthase complex composed at least of ATP5F1A/subunit alpha, ATP5F1B/subunit beta, ATP5MC1/subunit c (homooctomer), MT-ATP6/subunit a, MT-ATP8/subunit 8, ATP5ME/subunit e, ATP5MF/subunit f, ATP5MG/subunit g, ATP5MK/subunit k, ATP5MJ/subunit j, ATP5F1C/subunit gamma, ATP5F1D/subunit delta, ATP5F1E/subunit epsilon, ATP5PF/subunit F6, ATP5PB/subunit b, ATP5PD/subunit d, ATP5PO/subunit OSCP. ATP synthase complex consists of a soluble F(1) head domain (subunits alpha(3) and beta(3)) - the catalytic core - and a membrane F(0) domain - the membrane proton channel (subunits c, a, 8, e, f, g, k and j). These two domains are linked by a central stalk (subunits gamma, delta, and epsilon) rotating inside the F1 region and a stationary peripheral stalk (subunits F6, b, d, and OSCP).

Its subcellular location is the mitochondrion membrane. Its function is as follows. Subunit 8, of the mitochondrial membrane ATP synthase complex (F(1)F(0) ATP synthase or Complex V) that produces ATP from ADP in the presence of a proton gradient across the membrane which is generated by electron transport complexes of the respiratory chain. ATP synthase complex consist of a soluble F(1) head domain - the catalytic core - and a membrane F(1) domain - the membrane proton channel. These two domains are linked by a central stalk rotating inside the F(1) region and a stationary peripheral stalk. During catalysis, ATP synthesis in the catalytic domain of F(1) is coupled via a rotary mechanism of the central stalk subunits to proton translocation. In vivo, can only synthesize ATP although its ATP hydrolase activity can be activated artificially in vitro. Part of the complex F(0) domain. The polypeptide is ATP synthase F(0) complex subunit 8 (Anas platyrhynchos (Mallard)).